A 1008-amino-acid chain; its full sequence is Collagen alpha-2(I) chain (1008 aa).

The segment at 1–999 is disordered; it reads GGFDFSFLPQ…IRGSGGGYDF (999 aa). Residues Pro9, Pro12, Pro45, and Pro51 each carry the 4-hydroxyproline modification. Residues 38–81 are compositionally biased toward low complexity; sequence LMGPRGPPGASGAPGPQGFPAGEPGEPGQTGPAGARGPAGPPGK. Residues 82-94 are compositionally biased toward basic and acidic residues; sequence ADGHPGKPGRPGE. Residue Lys116 is modified to 5-hydroxylysine; alternate. Lys116 carries O-linked (Gal...) hydroxylysine; alternate glycosylation. Low complexity-rich tracts occupy residues 164-193, 239-260, and 301-314; these read VGAPGPAGARGSDGSVGPVGPAGPIGSAGP, PGANGLTGAKGAAGLPGVAGAP, and EPGSAGPQGPPGSS. Residues 336 to 345 are compositionally biased toward gly residues; that stretch reads GLRGGPGSRG. Residues 358-374 show a composition bias toward low complexity; sequence PAGARGASGPAGVRGPS. 2 positions are modified to 4-hydroxyproline: Pro380 and Pro383. The span at 409–428 shows a compositional bias: low complexity; the sequence is LPGIDGRPGPIGPAGARGEA. A compositionally biased stretch (gly residues) spans 455–466; sequence GNRGQGGKGEQG. Low complexity-rich tracts occupy residues 513–530 and 542–552; these read PGESGAVGPSGAIGSRGP and EPGVVGAPGTA. A compositionally biased stretch (gly residues) spans 553 to 562; the sequence is GPAGSGGLPG. 2 stretches are compositionally biased toward low complexity: residues 582 to 629 and 636 to 656; these read RGEV…PRGS and VGPAGPNGFAGPAGAAGQPGA. Residues 657–666 are compositionally biased toward basic and acidic residues; it reads KGERGTKGPK. Low complexity predominate over residues 674–684; sequence PTGPVGSAGPA. Over residues 694–703 the composition is skewed to gly residues; the sequence is GSRGDGGPPG. The segment covering 704-714 has biased composition (low complexity); the sequence is ATGFPGAAGRT. Residues 751 to 760 are compositionally biased toward gly residues; the sequence is GETGAGGPPG. 5 stretches are compositionally biased toward low complexity: residues 768-795, 803-813, 826-842, 862-884, and 892-907; these read SGEPGTAGPPGTAGPQGLLGAPGILGLP, LPGVAGAVGEP, PPGAVGSPGVNGAPGNP, YAGNAGPVGAAGAPGPHGTVGPA, and EPGPVGSVGPVGALGP. Positions 917-928 are enriched in basic and acidic residues; the sequence is RGDKGEPGDKGP. Positions 989–998 are enriched in gly residues; sequence GIRGSGGGYD.

The protein belongs to the fibrillar collagen family. In terms of assembly, trimers of one alpha 2(I) and two alpha 1(I) chains. Interacts (via C-terminus) with TMEM131 (via PapD-L domain); the interaction is direct and is involved in assembly and TRAPPIII ER-to-Golgi transport complex-dependent secretion of collagen. Post-translationally, prolines at the third position of the tripeptide repeating unit (G-X-Y) are hydroxylated in some or all of the chains. Expressed in bones.

Its subcellular location is the secreted. The protein resides in the extracellular space. It is found in the extracellular matrix. Its function is as follows. Type I collagen is a member of group I collagen (fibrillar forming collagen). In Nothrotheriops shastensis (Shasta ground sloth), this protein is Collagen alpha-2(I) chain.